The sequence spans 356 residues: Trifolitoxin operon protein TfxC (356 aa).

The protein is Trifolitoxin operon protein TfxC (tfxC) of Rhizobium leguminosarum bv. trifolii.